A 170-amino-acid chain; its full sequence is 3-hydroxydecanoyl-[acyl-carrier-protein] dehydratase (170 aa).

Histidine 69 is a catalytic residue.

This sequence belongs to the thioester dehydratase family. FabA subfamily. In terms of assembly, homodimer.

The protein localises to the cytoplasm. It carries out the reaction a (3R)-hydroxyacyl-[ACP] = a (2E)-enoyl-[ACP] + H2O. The enzyme catalyses (3R)-hydroxydecanoyl-[ACP] = (2E)-decenoyl-[ACP] + H2O. The catalysed reaction is (2E)-decenoyl-[ACP] = (3Z)-decenoyl-[ACP]. Its pathway is lipid metabolism; fatty acid biosynthesis. Functionally, necessary for the introduction of cis unsaturation into fatty acids. Catalyzes the dehydration of (3R)-3-hydroxydecanoyl-ACP to E-(2)-decenoyl-ACP and then its isomerization to Z-(3)-decenoyl-ACP. Can catalyze the dehydratase reaction for beta-hydroxyacyl-ACPs with saturated chain lengths up to 16:0, being most active on intermediate chain length. The protein is 3-hydroxydecanoyl-[acyl-carrier-protein] dehydratase of Caulobacter vibrioides (strain ATCC 19089 / CIP 103742 / CB 15) (Caulobacter crescentus).